The sequence spans 102 residues: MGPFRVDQFPDNYPAFLAVSTSCFLRYNRWCILGIHQEIGSLTLEEGEVFRQFQKEVKKLLRCKVNFHRKCSLYEEIYKKYVYNVPEKKGESSKCVAEEEED.

In terms of biological role, may be involved in the regulation of ssDNA versus dsDNA levels. The sequence is that of Protein V2 from Beet curly top virus (strain California/Logan) (BCTV).